The following is a 53-amino-acid chain: Bowman-Birk type proteinase inhibitor II-4 (53 aa).

4 cysteine pairs are disulfide-bonded: Cys8–Cys23, Cys13–Cys21, Cys30–Cys37, and Cys34–Cys49.

It belongs to the Bowman-Birk serine protease inhibitor family.

This Triticum aestivum (Wheat) protein is Bowman-Birk type proteinase inhibitor II-4.